Here is a 645-residue protein sequence, read N- to C-terminus: ATP-dependent zinc metalloprotease FtsH (645 aa).

At 1–8 (MDFNREHK) the chain is on the cytoplasmic side. The chain crosses the membrane as a helical span at residues 9–29 (INFLYVLAAMVGVLLIQSLVS). The Periplasmic portion of the chain corresponds to 30–105 (QPDHIRTIPY…FSGEPEPGPW (76 aa)). Residues 106–126 (PTILGWLMPIVGFALVWMFLI) form a helical membrane-spanning segment. Over 127–645 (RPMSMGPGMD…ALTVEGGEAQ (519 aa)) the chain is Cytoplasmic. Residue 199 to 206 (GPPGTGKT) coordinates ATP. Residue His423 participates in Zn(2+) binding. Glu424 is a catalytic residue. Zn(2+) is bound by residues His427 and Asp500. Residues 612 to 645 (SASVLRDGGDGAADAGQDRSGEHRALTVEGGEAQ) form a disordered region. Basic and acidic residues predominate over residues 627-637 (GQDRSGEHRAL).

This sequence in the central section; belongs to the AAA ATPase family. The protein in the C-terminal section; belongs to the peptidase M41 family. In terms of assembly, homohexamer. Zn(2+) is required as a cofactor.

Its subcellular location is the cell inner membrane. Acts as a processive, ATP-dependent zinc metallopeptidase for both cytoplasmic and membrane proteins. Plays a role in the quality control of integral membrane proteins. This chain is ATP-dependent zinc metalloprotease FtsH, found in Paraburkholderia phymatum (strain DSM 17167 / CIP 108236 / LMG 21445 / STM815) (Burkholderia phymatum).